We begin with the raw amino-acid sequence, 311 residues long: Phosphoribosylaminoimidazole-succinocarboxamide synthase (311 aa).

This sequence belongs to the SAICAR synthetase family.

It carries out the reaction 5-amino-1-(5-phospho-D-ribosyl)imidazole-4-carboxylate + L-aspartate + ATP = (2S)-2-[5-amino-1-(5-phospho-beta-D-ribosyl)imidazole-4-carboxamido]succinate + ADP + phosphate + 2 H(+). It participates in purine metabolism; IMP biosynthesis via de novo pathway; 5-amino-1-(5-phospho-D-ribosyl)imidazole-4-carboxamide from 5-amino-1-(5-phospho-D-ribosyl)imidazole-4-carboxylate: step 1/2. The protein is Phosphoribosylaminoimidazole-succinocarboxamide synthase of Azoarcus sp. (strain BH72).